We begin with the raw amino-acid sequence, 114 residues long: Hemerythrin subunit 2 (114 aa).

Positions 26, 55, 59, 74, 78, 102, and 107 each coordinate Fe cation.

Belongs to the hemerythrin family.

Its function is as follows. Hemerythrin is a respiratory protein in blood cells of certain marine worms. The oxygen-binding site in each chain contains two iron atoms. This Golfingia vulgaris (Marine worm) protein is Hemerythrin subunit 2.